The primary structure comprises 205 residues: Troponin I, cardiac muscle (205 aa).

The segment at Met1–Ala38 is disordered. The residue at position 2 (Ala2) is an N-acetylalanine. Position 5 is a phosphoserine (Ser5). Phosphoserine; by PKA and PKD/PRKD1 occurs at positions 17 and 18. Tyr21 carries the post-translational modification Phosphotyrosine. Thr26 is modified (phosphothreonine; by STK4/MST1). The segment at Glu27 to Arg74 is involved in binding TNC. Ser37 and Ser39 each carry phosphoserine; by PKC/PRKCE. Residue Thr46 is modified to Phosphothreonine; by STK4/MST1. Residue Ser72 is modified to Phosphoserine. At Thr73 the chain carries Phosphothreonine. Residues Asn124–Ser145 form an involved in binding TNC and actin region. Thr138 carries the phosphothreonine; by STK4/MST1 modification. Phosphoserine; by PAK3 is present on Ser145. Residue Thr176 is modified to Phosphothreonine. Phosphoserine is present on Ser194.

This sequence belongs to the troponin I family. Binds to actin and tropomyosin. Interacts with TRIM63. Interacts with STK4/MST1. In terms of processing, phosphorylated at Ser-17 and Ser-18 by PRKD1; phosphorylation reduces myofilament calcium sensitivity. Phosphorylated preferentially at Thr-26. Phosphorylation by STK4/MST1 alters its binding affinity to TNNC1 (cardiac Tn-C) and TNNT2 (cardiac Tn-T). Phosphorylated at Ser-37 and Ser-39 by PRKCE; phosphorylation increases myocardium contractile dysfunction.

Troponin I is the inhibitory subunit of troponin, the thin filament regulatory complex which confers calcium-sensitivity to striated muscle actomyosin ATPase activity. The protein is Troponin I, cardiac muscle (TNNI3) of Equus caballus (Horse).